A 98-amino-acid chain; its full sequence is DNA-directed RNA polymerase subunit Rpo11 (98 aa).

It belongs to the archaeal Rpo11/eukaryotic RPB11/RPC19 RNA polymerase subunit family. As to quaternary structure, part of the RNA polymerase complex.

The protein localises to the cytoplasm. It catalyses the reaction RNA(n) + a ribonucleoside 5'-triphosphate = RNA(n+1) + diphosphate. Its function is as follows. DNA-dependent RNA polymerase (RNAP) catalyzes the transcription of DNA into RNA using the four ribonucleoside triphosphates as substrates. This Korarchaeum cryptofilum (strain OPF8) protein is DNA-directed RNA polymerase subunit Rpo11.